The sequence spans 387 residues: 1-deoxy-D-xylulose 5-phosphate reductoisomerase (387 aa).

NADPH-binding residues include Thr10, Gly11, Ile13, Asn38, and Asn122. Lys123 serves as a coordination point for 1-deoxy-D-xylulose 5-phosphate. Glu124 lines the NADPH pocket. Asp148 lines the Mn(2+) pocket. Positions 149, 150, 174, and 197 each coordinate 1-deoxy-D-xylulose 5-phosphate. Mn(2+) is bound at residue Glu150. Gly203 provides a ligand contact to NADPH. 1-deoxy-D-xylulose 5-phosphate-binding residues include Ser210, Asn215, Lys216, and Glu219. Glu219 is a binding site for Mn(2+).

It belongs to the DXR family. Requires Mg(2+) as cofactor. The cofactor is Mn(2+).

It catalyses the reaction 2-C-methyl-D-erythritol 4-phosphate + NADP(+) = 1-deoxy-D-xylulose 5-phosphate + NADPH + H(+). It functions in the pathway isoprenoid biosynthesis; isopentenyl diphosphate biosynthesis via DXP pathway; isopentenyl diphosphate from 1-deoxy-D-xylulose 5-phosphate: step 1/6. In terms of biological role, catalyzes the NADPH-dependent rearrangement and reduction of 1-deoxy-D-xylulose-5-phosphate (DXP) to 2-C-methyl-D-erythritol 4-phosphate (MEP). This chain is 1-deoxy-D-xylulose 5-phosphate reductoisomerase, found in Ehrlichia ruminantium (strain Gardel).